The chain runs to 543 residues: Chaperonin GroEL (543 aa).

Residues 29–32 (TVGP), 86–90 (DGTTT), Gly413, and Asp504 each bind ATP.

The protein belongs to the chaperonin (HSP60) family. In terms of assembly, forms a cylinder of 14 subunits composed of two heptameric rings stacked back-to-back. Interacts with the co-chaperonin GroES.

Its subcellular location is the cytoplasm. The enzyme catalyses ATP + H2O + a folded polypeptide = ADP + phosphate + an unfolded polypeptide.. In terms of biological role, together with its co-chaperonin GroES, plays an essential role in assisting protein folding. The GroEL-GroES system forms a nano-cage that allows encapsulation of the non-native substrate proteins and provides a physical environment optimized to promote and accelerate protein folding. This Mycoplasma genitalium (strain ATCC 33530 / DSM 19775 / NCTC 10195 / G37) (Mycoplasmoides genitalium) protein is Chaperonin GroEL.